Reading from the N-terminus, the 197-residue chain is Endothelial cell-specific chemotaxis regulator (197 aa).

Residues 1–23 form the signal peptide; the sequence is MGSVRETQLRWAILGFLLLQAAS. The Extracellular portion of the chain corresponds to 24-113; the sequence is ETPSQFSTEA…PSPTSETVLT (90 aa). Residues 40 to 107 are disordered; that stretch reads TVADHLPSSP…ADSTVPPSPT (68 aa). Positions 50–63 are enriched in polar residues; the sequence is GPTWSQSQKHTSGL. The segment covering 64-82 has biased composition (low complexity); the sequence is SADVPSSGRSSDSMSGDTS. Polar residues predominate over residues 83-107; the sequence is HNVTSTSPNMSFRTTADSTVPPSPT. A helical transmembrane segment spans residues 114–134; that stretch reads VAAFGVISFIAILVVVVIVLV. Over 135–197 the chain is Cytoplasmic; that stretch reads SVVSLRFKCR…KGCPSAEKVL (63 aa). Disordered regions lie at residues 146–172 and 178–197; these read NKESEDPQKPGSSGLSESGSTANGEKE and SMKNINMNNSKGCPSAEKVL. 2 stretches are compositionally biased toward polar residues: residues 155 to 168 and 178 to 189; these read PGSSGLSESGSTAN and SMKNINMNNSKG. Ser-187 is modified (phosphoserine).

It belongs to the ECSCR family. In terms of assembly, interacts with FLNA. Interacts with the 20S proteasome subunit PSMA7. In terms of processing, may be heavily O-glycosylated.

It localises to the cell membrane. The protein localises to the cytoplasm. Its function is as follows. Regulates endothelial chemotaxis and tube formation. Has a role in angiogenesis and apoptosis via modulation of the actin cytoskeleton and facilitation of proteasomal degradation of the apoptosis inhibitors BIRC3/IAP1 and BIRC2/IAP2. The sequence is that of Endothelial cell-specific chemotaxis regulator (ECSCR) from Bos taurus (Bovine).